Consider the following 236-residue polypeptide: Ribose-5-phosphate isomerase A (236 aa).

Substrate is bound by residues 28 to 31, 83 to 86, and 96 to 99; these read TGST, DGAD, and KGGG. Glu105 acts as the Proton acceptor in catalysis. Residue Lys123 coordinates substrate.

This sequence belongs to the ribose 5-phosphate isomerase family. In terms of assembly, homodimer.

It carries out the reaction aldehydo-D-ribose 5-phosphate = D-ribulose 5-phosphate. It participates in carbohydrate degradation; pentose phosphate pathway; D-ribose 5-phosphate from D-ribulose 5-phosphate (non-oxidative stage): step 1/1. In terms of biological role, catalyzes the reversible conversion of ribose-5-phosphate to ribulose 5-phosphate. The sequence is that of Ribose-5-phosphate isomerase A from Methylorubrum populi (strain ATCC BAA-705 / NCIMB 13946 / BJ001) (Methylobacterium populi).